The primary structure comprises 189 residues: GTP cyclohydrolase 1 (189 aa).

Zn(2+)-binding residues include Cys-78, His-81, and Cys-150.

The protein belongs to the GTP cyclohydrolase I family. Homomer.

It catalyses the reaction GTP + H2O = 7,8-dihydroneopterin 3'-triphosphate + formate + H(+). The protein operates within cofactor biosynthesis; 7,8-dihydroneopterin triphosphate biosynthesis; 7,8-dihydroneopterin triphosphate from GTP: step 1/1. This is GTP cyclohydrolase 1 from Listeria monocytogenes serotype 4a (strain HCC23).